The chain runs to 198 residues: NAD(P)H dehydrogenase (quinone) (198 aa).

The 186-residue stretch at 4–189 (VLVLYYSMYG…SIARYQGEYV (186 aa)) folds into the Flavodoxin-like domain. FMN-binding positions include 10-15 (SMYGHI) and 78-80 (TRF). Residue Y12 participates in NAD(+) binding. W98 serves as a coordination point for substrate. Residues 113-118 (STGTGG) and H133 contribute to the FMN site.

Belongs to the WrbA family. FMN serves as cofactor.

The enzyme catalyses a quinone + NADH + H(+) = a quinol + NAD(+). It carries out the reaction a quinone + NADPH + H(+) = a quinol + NADP(+). The sequence is that of NAD(P)H dehydrogenase (quinone) from Escherichia coli (strain SE11).